The following is a 248-amino-acid chain: PF03932 family protein CutC (248 aa).

The protein belongs to the CutC family. As to quaternary structure, homodimer.

The protein resides in the cytoplasm. The protein is PF03932 family protein CutC of Salmonella typhimurium (strain LT2 / SGSC1412 / ATCC 700720).